The primary structure comprises 502 residues: MVGQRVRTRFAPSPTGYLHVGGLRTALYNFLFAKKMKGDFIIRIEDTDQSRKVEGAQQNLIKTLEWAGIIADESPQHGGSCGPYIQSERLDIYAKHCKQLLEDHHAYYCFATPEELEENRQLQLKQGLQPKYNRKWLPEEMGGTMPESLIRQKLEAGEPYVIRMKVPDYISVWFEDIIRGPIEFDSATIDDQVLMKSDGFPTYHFASVIDDHLMEISHIIRGEEWLSSMPKHLLLYEFFGWEAPKVAHLPLLLNPDRSKLSKRQGDVAVEDYIRKGYSSEAIVNFVALLGWNEGEGCEQEVYSLQELTDKFSLERVGKAGSIFTLDKLKWLEKQYIKNRSVEKLLSVVKPLLLEELEKKPSIMAREQITSDSYLSSVIELMRERVGFEHEFVTFSTYFYFEPESYDEESVKKRWQPNTNELLADFIPQLEALSDFTAENIEAALKAFVEPKGMKNAVLIHPLRIVTSGVGFGPSLYHMLEVLGKETVLRRIRKGLECITMPA.

A 'HIGH' region motif is present at residues 12-22 (PSPTGYLHVGG). The 'KMSKS' region signature appears at 259–263 (KLSKR). Residue Lys262 participates in ATP binding.

It belongs to the class-I aminoacyl-tRNA synthetase family. Glutamate--tRNA ligase type 1 subfamily. Monomer.

Its subcellular location is the cytoplasm. It carries out the reaction tRNA(Glu) + L-glutamate + ATP = L-glutamyl-tRNA(Glu) + AMP + diphosphate. Its function is as follows. Catalyzes the attachment of glutamate to tRNA(Glu) in a two-step reaction: glutamate is first activated by ATP to form Glu-AMP and then transferred to the acceptor end of tRNA(Glu). The protein is Glutamate--tRNA ligase of Chlorobium chlorochromatii (strain CaD3).